Here is a 433-residue protein sequence, read N- to C-terminus: Enolase (433 aa).

A (2R)-2-phosphoglycerate-binding site is contributed by Gln163. Glu205 acts as the Proton donor in catalysis. Residues Asp241, Glu289, and Asp316 each contribute to the Mg(2+) site. Residues Lys341, Arg370, Ser371, and Lys392 each contribute to the (2R)-2-phosphoglycerate site. Lys341 acts as the Proton acceptor in catalysis.

The protein belongs to the enolase family. Requires Mg(2+) as cofactor.

It localises to the cytoplasm. Its subcellular location is the secreted. The protein localises to the cell surface. The enzyme catalyses (2R)-2-phosphoglycerate = phosphoenolpyruvate + H2O. It participates in carbohydrate degradation; glycolysis; pyruvate from D-glyceraldehyde 3-phosphate: step 4/5. Functionally, catalyzes the reversible conversion of 2-phosphoglycerate (2-PG) into phosphoenolpyruvate (PEP). It is essential for the degradation of carbohydrates via glycolysis. This Treponema denticola (strain ATCC 35405 / DSM 14222 / CIP 103919 / JCM 8153 / KCTC 15104) protein is Enolase.